The chain runs to 415 residues: MRGANAWAPLCLLLAAATQLSRQQSPERPVFTCGGILTGESGFIGSEGFPGVYPPNSKCTWKITVPEGKVVVLNFRFIDLESDNLCRYDFVDVYNGHANGQRIGRFCGTFRPGALVSSGNKMMVQMISDANTAGNGFMAMFSAAEPNERGDQYCGGLLDRPSGSFKTPNWPDRDYPAGVTCVWHIVAPKNQLIELKFEKFDVERDNYCRYDYVAVFNGGEVNDARRIGKYCGDSPPAPIVSERNELLIQFLSDLSLTADGFIGHYIFRPKKLPTTTEQPVTTTFPVTTGLKPTVALCQQKCRRTGTLEGNYCSSDFVLAGTVITTITRDGSLHATVSIINIYKEGNLAIQQAGKNMSARLTVVCKQCPLLRRGLNYIIMGQVGEDGRGKIMPNSFIMMFKTKNQKLLDALKNKQC.

A signal peptide spans 1 to 23 (MRGANAWAPLCLLLAAATQLSRQ). Intrachain disulfides connect Cys33/Cys59, Cys86/Cys107, Cys154/Cys181, Cys208/Cys231, Cys297/Cys364, Cys301/Cys367, and Cys312/Cys415. CUB domains lie at 33 to 144 (CGGI…FSAA) and 154 to 268 (CGGL…YIFR). Residues 297-415 (CQQKCRRTGT…LLDALKNKQC (119 aa)) enclose the NTR domain. A glycan (N-linked (GlcNAc...) asparagine) is linked at Asn355.

In terms of assembly, interacts with heparin with high affinity, and type I or II collagen. Post-translationally, O-glycosylated; contains sialic acid. In terms of tissue distribution, highly expressed in the heart, trabecular meshwork, pituitary gland, bladder, mammary gland, trachea and placenta and weakly expressed in the brain. Expressed in cartilage.

It localises to the secreted. In terms of biological role, binds to the C-terminal propeptide of types I and II procollagens and may enhance the cleavage of that propeptide by BMP1. This is Procollagen C-endopeptidase enhancer 2 (PCOLCE2) from Homo sapiens (Human).